The following is a 394-amino-acid chain: Elongation factor Tu 2 (394 aa).

Residues 10–204 (KPHVNVGTIG…YLDSYIPEPE (195 aa)) enclose the tr-type G domain. Residues 19–26 (GHVDHGKT) form a G1 region. 19–26 (GHVDHGKT) contributes to the GTP binding site. Mg(2+) is bound at residue Thr-26. Residues 60 to 64 (GITIN) form a G2 region. Residues 81–84 (DCPG) are G3. Residues 81–85 (DCPGH) and 136–139 (NKCD) contribute to the GTP site. Residues 136–139 (NKCD) form a G4 region. Residues 174-176 (SAL) are G5.

Belongs to the TRAFAC class translation factor GTPase superfamily. Classic translation factor GTPase family. EF-Tu/EF-1A subfamily. As to quaternary structure, monomer.

It is found in the cytoplasm. The catalysed reaction is GTP + H2O = GDP + phosphate + H(+). Functionally, GTP hydrolase that promotes the GTP-dependent binding of aminoacyl-tRNA to the A-site of ribosomes during protein biosynthesis. This Yersinia pseudotuberculosis serotype O:1b (strain IP 31758) protein is Elongation factor Tu 2.